A 649-amino-acid polypeptide reads, in one-letter code: Threonine--tRNA ligase (649 aa).

The region spanning 1-66 (MVQITLPDGS…DNDAQLAIVT (66 aa)) is the TGS domain. Residues 247-538 (DHRKIGRELD…LIENHAGAMP (292 aa)) are catalytic. Residues Cys-338, His-389, and His-515 each coordinate Zn(2+).

The protein belongs to the class-II aminoacyl-tRNA synthetase family. Homodimer. Zn(2+) serves as cofactor.

It is found in the cytoplasm. It carries out the reaction tRNA(Thr) + L-threonine + ATP = L-threonyl-tRNA(Thr) + AMP + diphosphate + H(+). Its function is as follows. Catalyzes the attachment of threonine to tRNA(Thr) in a two-step reaction: L-threonine is first activated by ATP to form Thr-AMP and then transferred to the acceptor end of tRNA(Thr). Also edits incorrectly charged L-seryl-tRNA(Thr). This is Threonine--tRNA ligase from Bordetella bronchiseptica (strain ATCC BAA-588 / NCTC 13252 / RB50) (Alcaligenes bronchisepticus).